The chain runs to 712 residues: Cadherin-13 (712 aa).

The first 22 residues, 1–22, serve as a signal peptide directing secretion; the sequence is MQHKTQLTLSFLLSQVLLLACA. The propeptide occupies 23–138; sequence EDLECTPGFQ…GNLGIPRQKR (116 aa). N-linked (GlcNAc...) asparagine glycosylation occurs at Asn-86. Cadherin domains are found at residues 143 to 245, 246 to 363, 364 to 477, 478 to 585, and 586 to 680; these read TPIL…RPMF, KEGP…PPEF, TKKE…GPVF, HPNP…VPSL, and YPTL…LQVC. 5 N-linked (GlcNAc...) asparagine glycosylation sites follow: Asn-382, Asn-500, Asn-530, Asn-638, and Asn-671. Asp-693 is lipidated: GPI-anchor amidated aspartate. Residues 694–712 constitute a propeptide, removed in mature form; the sequence is ALHISMTLILLSLFSLFCL.

By contrast to classical cadherins, homodimerization in trans is not mediated by cadherin EC1 domain strand-swapping, but instead through a homophilic adhesive interface which joins two elongated EC1-EC2 domains through a region near their Ca2+-binding sites to form a tetrahedral, X-like shape. As to expression, neural tissues. Also found in muscles; kidney and retina.

It is found in the cell membrane. Its subcellular location is the cytoplasm. Functionally, cadherins are calcium-dependent cell adhesion proteins. They preferentially interact with themselves in a homophilic manner in connecting cells; cadherins may thus contribute to the sorting of heterogeneous cell types. May act as a negative regulator of neural cell growth. The protein is Cadherin-13 (CDH13) of Gallus gallus (Chicken).